A 571-amino-acid chain; its full sequence is Cerebral cavernous malformations 2 protein-like (571 aa).

Disordered stretches follow at residues 164 to 193 (AGVD…GTAE), 212 to 295 (AEAR…PQDP), and 544 to 571 (LAPD…DNYL). Positions 184–193 (PEKRRVGTAE) are enriched in basic and acidic residues. A compositionally biased stretch (gly residues) spans 212–223 (AEARAGGGGGGS). The span at 237 to 251 (WERRQTFSGSWERRH) shows a compositional bias: basic and acidic residues. Residues 253–264 (GGGGGGGAGKPG) are compositionally biased toward gly residues. Residues 286-295 (GPNPLDPQDP) are compositionally biased toward pro residues. Residues 545–555 (APDDDDDDEDE) are compositionally biased toward acidic residues.

The protein belongs to the CCM2 family.

The polypeptide is Cerebral cavernous malformations 2 protein-like (CCM2L) (Homo sapiens (Human)).